Reading from the N-terminus, the 310-residue chain is MDPGNHSSVTESILAGLSEQPELQLRLFLLFLGICVVTVVGNLGMITLIGLSSHLHTPMYYFLSSLSFIDFCHSTVITPKMLVNFATEKNIISYPECMAQLYLFSIFAIAECHMLAAMAYDCYVAICSPLLYNVIMSYHHCFWLTVGVYILGILGSTIHTSFMLRLFLCKTNVINHYFCDLFPLLGLSCSSTYINELLVLVLSAFNILMPALTILASYIFIIASILRIHSTEGRSKAFSTCSSHILAVAVFFGSAAFMYLQPSSVSSMDQRKVSSVFYTTIVPMLNPLIYSLRNKDVKLAVKKILHQTAC.

The Extracellular portion of the chain corresponds to 1 to 25 (MDPGNHSSVTESILAGLSEQPELQL). A glycan (N-linked (GlcNAc...) asparagine) is linked at Asn-5. The helical transmembrane segment at 26–46 (RLFLLFLGICVVTVVGNLGMI) threads the bilayer. Topologically, residues 47-54 (TLIGLSSH) are cytoplasmic. A helical membrane pass occupies residues 55 to 75 (LHTPMYYFLSSLSFIDFCHST). The Extracellular portion of the chain corresponds to 76-99 (VITPKMLVNFATEKNIISYPECMA). Cys-97 and Cys-189 are disulfide-bonded. Residues 100–120 (QLYLFSIFAIAECHMLAAMAY) traverse the membrane as a helical segment. At 121-139 (DCYVAICSPLLYNVIMSYH) the chain is on the cytoplasmic side. A helical membrane pass occupies residues 140-160 (HCFWLTVGVYILGILGSTIHT). Residues 161–197 (SFMLRLFLCKTNVINHYFCDLFPLLGLSCSSTYINEL) lie on the Extracellular side of the membrane. A helical transmembrane segment spans residues 198–217 (LVLVLSAFNILMPALTILAS). Topologically, residues 218–237 (YIFIIASILRIHSTEGRSKA) are cytoplasmic. The chain crosses the membrane as a helical span at residues 238–258 (FSTCSSHILAVAVFFGSAAFM). Over 259-271 (YLQPSSVSSMDQR) the chain is Extracellular. A helical transmembrane segment spans residues 272–292 (KVSSVFYTTIVPMLNPLIYSL). Over 293–310 (RNKDVKLAVKKILHQTAC) the chain is Cytoplasmic.

Belongs to the G-protein coupled receptor 1 family.

It localises to the cell membrane. Odorant receptor. This Homo sapiens (Human) protein is Olfactory receptor 8G3.